The sequence spans 338 residues: 3-phosphoshikimate 1-carboxyvinyltransferase 2 (338 aa).

Arginine 25 is a binding site for phosphoenolpyruvate. 3-phosphoshikimate contacts are provided by serine 72, serine 73, glutamine 74, serine 100, aspartate 225, and lysine 252. Residue glutamine 74 participates in phosphoenolpyruvate binding. Aspartate 225 acts as the Proton acceptor in catalysis. Phosphoenolpyruvate is bound by residues arginine 256, arginine 298, and lysine 323.

The protein belongs to the EPSP synthase family.

The protein resides in the plastid. It is found in the chloroplast. The enzyme catalyses 3-phosphoshikimate + phosphoenolpyruvate = 5-O-(1-carboxyvinyl)-3-phosphoshikimate + phosphate. Its pathway is metabolic intermediate biosynthesis; chorismate biosynthesis; chorismate from D-erythrose 4-phosphate and phosphoenolpyruvate: step 6/7. Its function is as follows. Catalyzes the transfer of the enolpyruvyl moiety of phosphoenolpyruvate (PEP) to the 5-hydroxyl of shikimate-3-phosphate (S3P) to produce enolpyruvyl shikimate-3-phosphate and inorganic phosphate. This chain is 3-phosphoshikimate 1-carboxyvinyltransferase 2 (EPSPS-2), found in Nicotiana tabacum (Common tobacco).